A 319-amino-acid polypeptide reads, in one-letter code: Acetyl-coenzyme A carboxylase carboxyl transferase subunit alpha (319 aa).

Positions 35-296 (NIDEEVHRLR…KAQLLEDLAD (262 aa)) constitute a CoA carboxyltransferase C-terminal domain.

This sequence belongs to the AccA family. As to quaternary structure, acetyl-CoA carboxylase is a heterohexamer composed of biotin carboxyl carrier protein (AccB), biotin carboxylase (AccC) and two subunits each of ACCase subunit alpha (AccA) and ACCase subunit beta (AccD).

It localises to the cytoplasm. The enzyme catalyses N(6)-carboxybiotinyl-L-lysyl-[protein] + acetyl-CoA = N(6)-biotinyl-L-lysyl-[protein] + malonyl-CoA. It participates in lipid metabolism; malonyl-CoA biosynthesis; malonyl-CoA from acetyl-CoA: step 1/1. Its function is as follows. Component of the acetyl coenzyme A carboxylase (ACC) complex. First, biotin carboxylase catalyzes the carboxylation of biotin on its carrier protein (BCCP) and then the CO(2) group is transferred by the carboxyltransferase to acetyl-CoA to form malonyl-CoA. The protein is Acetyl-coenzyme A carboxylase carboxyl transferase subunit alpha of Salmonella arizonae (strain ATCC BAA-731 / CDC346-86 / RSK2980).